The chain runs to 70 residues: Sec-independent protein translocase protein TatA (70 aa).

A helical membrane pass occupies residues 1 to 21 (MFGLGGQELLLILLIILLLFG). Residues 47–70 (EDEFNKAMSDPPEKKEKESPSDKG) form a disordered region. Positions 57 to 70 (PPEKKEKESPSDKG) are enriched in basic and acidic residues.

Belongs to the TatA/E family. Forms a complex with TatC.

The protein resides in the cell inner membrane. In terms of biological role, part of the twin-arginine translocation (Tat) system that transports large folded proteins containing a characteristic twin-arginine motif in their signal peptide across membranes. TatA could form the protein-conducting channel of the Tat system. The chain is Sec-independent protein translocase protein TatA from Prosthecochloris aestuarii (strain DSM 271 / SK 413).